Consider the following 256-residue polypeptide: 3-dehydroquinate dehydratase (256 aa).

3-dehydroquinate contacts are provided by residues Ser-19, 38–40 (EIR), and Arg-68. Catalysis depends on His-122, which acts as the Proton donor/acceptor. The Schiff-base intermediate with substrate role is filled by Lys-147. Arg-185, Thr-204, and Gln-208 together coordinate 3-dehydroquinate.

Belongs to the type-I 3-dehydroquinase family. Homodimer.

The catalysed reaction is 3-dehydroquinate = 3-dehydroshikimate + H2O. It functions in the pathway metabolic intermediate biosynthesis; chorismate biosynthesis; chorismate from D-erythrose 4-phosphate and phosphoenolpyruvate: step 3/7. Functionally, involved in the third step of the chorismate pathway, which leads to the biosynthesis of aromatic amino acids. Catalyzes the cis-dehydration of 3-dehydroquinate (DHQ) and introduces the first double bond of the aromatic ring to yield 3-dehydroshikimate. The sequence is that of 3-dehydroquinate dehydratase from Methanospirillum hungatei JF-1 (strain ATCC 27890 / DSM 864 / NBRC 100397 / JF-1).